The sequence spans 362 residues: Peptide chain release factor 1 (362 aa).

Q236 is subject to N5-methylglutamine.

Belongs to the prokaryotic/mitochondrial release factor family. In terms of processing, methylated by PrmC. Methylation increases the termination efficiency of RF1.

Its subcellular location is the cytoplasm. Its function is as follows. Peptide chain release factor 1 directs the termination of translation in response to the peptide chain termination codons UAG and UAA. In Lactobacillus johnsonii (strain CNCM I-12250 / La1 / NCC 533), this protein is Peptide chain release factor 1.